A 264-amino-acid polypeptide reads, in one-letter code: Hydroxyethylthiazole kinase (264 aa).

Position 43 (methionine 43) interacts with substrate. Residues lysine 119 and serine 165 each contribute to the ATP site. Position 192 (glycine 192) interacts with substrate.

Belongs to the Thz kinase family. The cofactor is Mg(2+).

It carries out the reaction 5-(2-hydroxyethyl)-4-methylthiazole + ATP = 4-methyl-5-(2-phosphooxyethyl)-thiazole + ADP + H(+). Its pathway is cofactor biosynthesis; thiamine diphosphate biosynthesis; 4-methyl-5-(2-phosphoethyl)-thiazole from 5-(2-hydroxyethyl)-4-methylthiazole: step 1/1. Its function is as follows. Catalyzes the phosphorylation of the hydroxyl group of 4-methyl-5-beta-hydroxyethylthiazole (THZ). The protein is Hydroxyethylthiazole kinase of Methanocorpusculum labreanum (strain ATCC 43576 / DSM 4855 / Z).